Reading from the N-terminus, the 1376-residue chain is Zinc finger MYM-type protein 2 (1376 aa).

Residues 30–53 show a composition bias toward polar residues; it reads NVGNSFSGPPNPLVSRSSKFQNSS. 2 disordered regions span residues 30–56 and 85–158; these read NVGNSFSGPPNPLVSRSSKFQNSSVED and TSSK…FSSS. Glycyl lysine isopeptide (Lys-Gly) (interchain with G-Cter in SUMO2) cross-links involve residues Lys48, Lys88, Lys98, and Lys104. Residues 127–138 show a composition bias toward polar residues; the sequence is TNQGQEKSSSNF. A compositionally biased stretch (basic and acidic residues) spans 139–152; sequence IERRPSETKNRTND. Residues Lys147, Lys253, and Lys297 each participate in a glycyl lysine isopeptide (Lys-Gly) (interchain with G-Cter in SUMO2) cross-link. The interval 269–304 is disordered; that stretch reads DVFQNGESAPHHNPDSWISQSASFPRNQKQQGVDSL. Positions 284–302 are enriched in polar residues; that stretch reads SWISQSASFPRNQKQQGVD. Ser305 carries the post-translational modification Phosphoserine. Residues Lys312, Lys324, Lys347, and Lys365 each participate in a glycyl lysine isopeptide (Lys-Gly) (interchain with G-Cter in SUMO2) cross-link. The segment at 326-362 adopts an MYM-type 1 zinc-finger fold; it reads VKVTCANCKKPLQKGQTAYQRKGSAHLFCSTTCLSSF. Residues 368–408 form an MYM-type 2 zinc finger; it reads PKKLCVMCKKDITTMKGTIVAQVDSSESFQEFCSTSCLSLY. Glycyl lysine isopeptide (Lys-Gly) (interchain with G-Cter in SUMO2) cross-links involve residues Lys416, Lys440, Lys490, Lys502, Lys512, Lys528, and Lys531. MYM-type zinc fingers lie at residues 420–455 and 462–501; these read NKSRCTICGKLTEIRHEVSFKNMTHKLCSDHCFNRY and IMNCCEQCGEYLPSKGAGNNVLVVDGQQKRFCCQSCVTEY. The MYM-type 5 zinc finger occupies 532-569; it reads LTTCTGCRTQCRFFDMTQCIGPNGYMEPYCSTACMNSH. Residues Lys575, Lys602, Lys648, Lys657, Lys687, Lys699, and Lys708 each participate in a glycyl lysine isopeptide (Lys-Gly) (interchain with G-Cter in SUMO2) cross-link. The MYM-type 6 zinc finger occupies 635-670; it reads QLKCNYCKNSFCSKPEILEWENKVHQFCSKTCSDDY. MYM-type zinc fingers lie at residues 722–757 and 763–798; these read RCVTCNYCSQLCKKGATKELDGVVRDFCSEDCCKKF and KAARCDCCKSQGTLKERVQWRGEMKHFCDQHCLLRF. Residues Lys763, Lys787, Lys811, and Lys828 each participate in a glycyl lysine isopeptide (Lys-Gly) (interchain with G-Cter in SUMO2) cross-link. At Ser837 the chain carries Phosphoserine. The segment at 1027–1063 is disordered; sequence VFGEEYEEQPRPRSKKKGTKRKAVSGYQSHDDSSDNS. Residues 1038–1049 show a composition bias toward basic residues; the sequence is PRSKKKGTKRKA. Ser1063 is modified (phosphoserine). Thr1375 is subject to Phosphothreonine.

Can form homodimers. May be a component of a BHC histone deacetylase complex that contains HDAC1, HDAC2, HMG20B/BRAF35, KDM1A, RCOR1/CoREST, PHF21A/BHC80, ZMYM2, ZNF217, ZMYM3, GSE1 and GTF2I. Interacts with FOXP1 and FOXP2. Low but widespread expression is detected in the developing kidney.

The protein resides in the nucleus. Involved in the negative regulation of transcription. The sequence is that of Zinc finger MYM-type protein 2 (Zmym2) from Mus musculus (Mouse).